A 253-amino-acid chain; its full sequence is MNEQGEAINNSAESRIQLESSWKAHVGNWLLRPEMRDLSAFLRARKVAGVSVYPPGSQIFAAFEATPFQRVKAVILGQDPYHGQGQAHGLCFSVRPGMPLPPSLLNIYKELEEDLGLLRPDHGCLLPWAKRGVLLLNAVLTVEDGRAGAHQGKGWEGFTDHVVDTLNREREGLVFMLWGSYAQAKGKVIDTRRHLVLKAAHPSPLSAHRGFLGCRHFSLCNQYLSQHGLGMVDWSLPPCIALDGAILNGRIAV.

Asp79 serves as the catalytic Proton acceptor.

Belongs to the uracil-DNA glycosylase (UDG) superfamily. UNG family.

Its subcellular location is the cytoplasm. The catalysed reaction is Hydrolyzes single-stranded DNA or mismatched double-stranded DNA and polynucleotides, releasing free uracil.. Functionally, excises uracil residues from the DNA which can arise as a result of misincorporation of dUMP residues by DNA polymerase or due to deamination of cytosine. In Xylella fastidiosa (strain 9a5c), this protein is Uracil-DNA glycosylase.